Reading from the N-terminus, the 375-residue chain is tRNA(Met) cytidine acetate ligase (375 aa).

ATP-binding positions include 7-20 (VVEY…HRYH), Gly-101, Asn-151, and Arg-176.

It belongs to the TmcAL family.

The protein localises to the cytoplasm. The enzyme catalyses cytidine(34) in elongator tRNA(Met) + acetate + ATP = N(4)-acetylcytidine(34) in elongator tRNA(Met) + AMP + diphosphate. Functionally, catalyzes the formation of N(4)-acetylcytidine (ac(4)C) at the wobble position of elongator tRNA(Met), using acetate and ATP as substrates. First activates an acetate ion to form acetyladenylate (Ac-AMP) and then transfers the acetyl group to tRNA to form ac(4)C34. This chain is tRNA(Met) cytidine acetate ligase, found in Limosilactobacillus fermentum (strain NBRC 3956 / LMG 18251) (Lactobacillus fermentum).